The sequence spans 159 residues: Cystatin-9 (159 aa).

Residues 1 to 28 (MSSPQRRKAMPWALSLLLMGFQLLVTYA) form the signal peptide.

Belongs to the cystatin family. Expressed in heart, placenta, lung, liver, skeletal muscle and pancreas. Not expressed in brain. Expressed in epididymis, kidney, testis, spinal cord, and thymus with a strong expression in epididymis and kidney and a weak expression in the spinal cord and thymus.

It localises to the secreted. Its function is as follows. May be involved in testis development. May play a role in hematopoietic differentiation or inflammation. Has immunomodulatory and antimicrobial functions against Francisella tularensis, a Gram-negative bacteria. The polypeptide is Cystatin-9 (CST9) (Homo sapiens (Human)).